A 377-amino-acid polypeptide reads, in one-letter code: Alanine dehydrogenase (377 aa).

The substrate site is built by Arg-15 and Lys-74. The active-site Proton donor/acceptor is the His-95. Residues Ser-133, Asp-197, Arg-202, Ser-219, 238 to 239, 266 to 269, and 304 to 307 each bind NAD(+); these read VL, VAID, and VGNM. Asp-269 (proton donor/acceptor) is an active-site residue.

Belongs to the AlaDH/PNT family. In terms of assembly, homohexamer.

It carries out the reaction L-alanine + NAD(+) + H2O = pyruvate + NH4(+) + NADH + H(+). The protein operates within organosulfur degradation; alkanesulfonate degradation. Involved in an anaerobic respiration pathway that converts the sulfonate taurine (2-aminoethanesulfonate) to ammonia, acetate and sulfide. Acts as an alanine dehydrogenase that regenerates pyruvate, the amino group acceptor for the taurine--pyruvate aminotransferase enzyme, and liberates ammonia. The chain is Alanine dehydrogenase from Bilophila wadsworthia (strain 3_1_6).